A 424-amino-acid polypeptide reads, in one-letter code: Histidine--tRNA ligase (424 aa).

The protein belongs to the class-II aminoacyl-tRNA synthetase family. Homodimer.

Its subcellular location is the cytoplasm. It carries out the reaction tRNA(His) + L-histidine + ATP = L-histidyl-tRNA(His) + AMP + diphosphate + H(+). This Bacillus subtilis (strain 168) protein is Histidine--tRNA ligase (hisS).